The primary structure comprises 131 residues: MYNKVIMIGRLTAKPEMVKTPTDKSVTRATVAVNRRFKGSNGEREADFINVVMWGRLAETLASYGTKGSLISIDGELRTRKYEKDGQTHYITEVLASSFQLLESRAQRAMRENNVSGDLSDLVLEEEELPF.

The SSB domain occupies 1–103 (MYNKVIMIGR…VLASSFQLLE (103 aa)). The Important for interaction with partner proteins signature appears at 126–131 (EEELPF).

Homotetramer.

Its function is as follows. Plays an important role in DNA replication, recombination and repair. Binds to ssDNA and to an array of partner proteins to recruit them to their sites of action during DNA metabolism. The polypeptide is Single-stranded DNA-binding protein 2 (ssb2) (Streptococcus agalactiae serotype V (strain ATCC BAA-611 / 2603 V/R)).